The sequence spans 307 residues: Lipoyl synthase (307 aa).

7 residues coordinate [4Fe-4S] cluster: cysteine 55, cysteine 60, cysteine 66, cysteine 81, cysteine 85, cysteine 88, and serine 292. The region spanning 67–281 (WEDREATFLI…ARHAEELGFS (215 aa)) is the Radical SAM core domain.

The protein belongs to the radical SAM superfamily. Lipoyl synthase family. [4Fe-4S] cluster serves as cofactor.

The protein resides in the cytoplasm. The catalysed reaction is [[Fe-S] cluster scaffold protein carrying a second [4Fe-4S](2+) cluster] + N(6)-octanoyl-L-lysyl-[protein] + 2 oxidized [2Fe-2S]-[ferredoxin] + 2 S-adenosyl-L-methionine + 4 H(+) = [[Fe-S] cluster scaffold protein] + N(6)-[(R)-dihydrolipoyl]-L-lysyl-[protein] + 4 Fe(3+) + 2 hydrogen sulfide + 2 5'-deoxyadenosine + 2 L-methionine + 2 reduced [2Fe-2S]-[ferredoxin]. It participates in protein modification; protein lipoylation via endogenous pathway; protein N(6)-(lipoyl)lysine from octanoyl-[acyl-carrier-protein]: step 2/2. Functionally, catalyzes the radical-mediated insertion of two sulfur atoms into the C-6 and C-8 positions of the octanoyl moiety bound to the lipoyl domains of lipoate-dependent enzymes, thereby converting the octanoylated domains into lipoylated derivatives. This chain is Lipoyl synthase, found in Mycolicibacterium paratuberculosis (strain ATCC BAA-968 / K-10) (Mycobacterium paratuberculosis).